The primary structure comprises 209 residues: dITP/XTP pyrophosphatase (209 aa).

7 to 12 contacts substrate; the sequence is SSHGYK. Residue Asp70 is the Proton acceptor of the active site. Residue Asp70 coordinates Mg(2+). Residues Ser71, 154–157, Lys177, and 182–183 contribute to the substrate site; these read FGYD and HR.

This sequence belongs to the HAM1 NTPase family. As to quaternary structure, homodimer. Mg(2+) is required as a cofactor.

It catalyses the reaction XTP + H2O = XMP + diphosphate + H(+). It carries out the reaction dITP + H2O = dIMP + diphosphate + H(+). The catalysed reaction is ITP + H2O = IMP + diphosphate + H(+). In terms of biological role, pyrophosphatase that catalyzes the hydrolysis of nucleoside triphosphates to their monophosphate derivatives, with a high preference for the non-canonical purine nucleotides XTP (xanthosine triphosphate), dITP (deoxyinosine triphosphate) and ITP. Seems to function as a house-cleaning enzyme that removes non-canonical purine nucleotides from the nucleotide pool, thus preventing their incorporation into DNA/RNA and avoiding chromosomal lesions. This Chlamydia trachomatis serovar L2 (strain ATCC VR-902B / DSM 19102 / 434/Bu) protein is dITP/XTP pyrophosphatase.